Reading from the N-terminus, the 222-residue chain is Large ribosomal subunit protein mL64 (222 aa).

Disordered stretches follow at residues 19–46 (APGSRGYRARPPPRRRPGPRWPDPEDLL) and 188–222 (KRLKEEKQKRKKEARAAALAAAVAQDPAASGAPSS). A compositionally biased stretch (basic residues) spans 25–36 (YRARPPPRRRPG). A coiled-coil region spans residues 99 to 212 (MQESLRVKQL…AAALAAAVAQ (114 aa)). Positions 184–200 (KKERKRLKEEKQKRKKE) match the Nuclear localization signal motif. The span at 203–212 (AAALAAAVAQ) shows a compositional bias: low complexity.

This sequence belongs to the mitochondrion-specific ribosomal protein mL64 family. In terms of assembly, component of the mitochondrial large ribosomal subunit (mt-LSU). Mature mammalian 55S mitochondrial ribosomes consist of a small (28S) and a large (39S) subunit. The 28S small subunit contains a 12S ribosomal RNA (12S mt-rRNA) and 30 different proteins. The 39S large subunit contains a 16S rRNA (16S mt-rRNA), a copy of mitochondrial valine transfer RNA (mt-tRNA(Val)), which plays an integral structural role, and 52 different proteins. Interacts with GADD45A, GADD45B and GADD45G. Interacts with NR4A1 via the NR4A1 AB domain. Interacts with ATAD3A and ATAD3B. As to quaternary structure, (Microbial infection) Interacts with the human papilloma virus type 16 (HPV 16) minor capsid protein L2. Widely expressed. Highly expressed in the thyroid gland, heart, lymph nodes, trachea and adrenal tissues. Expressed at lower level in liver skeletal muscle, kidney, pancreas, testis, ovary and stomach. Barely detectable in adrenal adenoma and papillary thyroid cancer.

Its subcellular location is the mitochondrion. It localises to the nucleus. In terms of biological role, acts as a negative regulator of G1 to S cell cycle phase progression by inhibiting cyclin-dependent kinases. Inhibitory effects are additive with GADD45 proteins but also occur in the absence of GADD45 proteins. Acts as a repressor of the orphan nuclear receptor NR4A1 by inhibiting AB domain-mediated transcriptional activity. May be involved in the hormone-mediated regulation of NR4A1 transcriptional activity. May play a role in mitochondrial protein synthesis. The sequence is that of Large ribosomal subunit protein mL64 (GADD45GIP1) from Homo sapiens (Human).